The chain runs to 59 residues: Large ribosomal subunit protein bL35 (59 aa).

Disordered stretches follow at residues 1-22 (MKVK…IKRK) and 30-49 (APHK…TVSA). Basic residues predominate over residues 30–43 (APHKTTKQKRHLRK).

Belongs to the bacterial ribosomal protein bL35 family.

The protein is Large ribosomal subunit protein bL35 (rpmI) of Mycoplasma pneumoniae (strain ATCC 29342 / M129 / Subtype 1) (Mycoplasmoides pneumoniae).